A 127-amino-acid polypeptide reads, in one-letter code: ADIGMNIAGPAYNFGYNTGDAGGHSRVESGTAGAAAGSYSYIDANGDRRTVHYTAGPDGFKASGDIGVDRRTAAAAAALAALAPKAPVAAAPVAPVAPVVPGAWGYWGAPHVYSAVYPGLAGYAAHW.

The region spanning 9–87 (GPAYNFGYNT…ALAALAPKAP (79 aa)) is the Chitin-binding type R&amp;R domain.

In terms of biological role, component of the rigid cuticle of the spider. This chain is Adult-specific rigid cuticular protein 12.6, found in Araneus diadematus (European garden spider).